The chain runs to 738 residues: MSNLEHEAERVEMAAATTEIRQRVLELRQLVQRASYAYYVLDAPILEDVVYDQLYRELQDLETQYPELLTPDSPTQRVGEQPATQFVSVQHRIPLYSLENAFAVADMQAWQDRWQRQGQAIGEQSATLRSPEYVCELKIDGSALALTYENGVLVRGATRGDGVYGEDITANVRTIRSIPLRLDWPDPPPIVEVRGEAFLPLDVFHRLNQEREQAGESLFANPRNAAAGTLRQLDARIVAKRRLDFFAYTLHLPLASARSATQPAAAQQLDLLAVAQSDPAVAAQQLDLSSASQAESVTTHLPQTQWQSLELLQQIGFRVNPHRQLCPTLADVRQYYDHWNHGRLDLPYMTDGVVVKLNSLRLQEHLGFTQKFPRWAIAWKYEPEQAVTEVLNISVNVGRTGALTPVAELRPVQLAGTTVSRATLHNRDRLAELDLHIGDKVVIHKAGEIIPEILQVFPELRPADARPYQLPTHCPECGQPVVQPVDEAVTRCLNVSCPAIVRGAIVHWVGRDAMDIDGVGEKLVRQLVDRGLVNSVADLYRLTVAQLLTLERMGNKLAEKVVAAIAKSQSRPWSRVLYGLGIRHVGSVNAQVLTTAFPSVERLMAASAEDIEAVHGIGPEIAQSIVQWFQTPANHSLIEQLSAAGVQLAQDTVAVPPSQLPQPLAGKTFVLTGTLPTLSRDEARSMIGQAGGKVTDSVSKKTDFLVVGADAGSKLDKAGQLGIPCLSESQLLELLEET.

Residues Asp-48–Asp-52, Ser-97–Leu-98, and Glu-136 contribute to the NAD(+) site. The active-site N6-AMP-lysine intermediate is Lys-138. 4 residues coordinate NAD(+): Arg-159, Glu-196, Lys-356, and Lys-380. 4 residues coordinate Zn(2+): Cys-474, Cys-477, Cys-492, and Cys-497. The region spanning Gln-659–Thr-738 is the BRCT domain.

It belongs to the NAD-dependent DNA ligase family. LigA subfamily. Mg(2+) is required as a cofactor. Mn(2+) serves as cofactor.

It catalyses the reaction NAD(+) + (deoxyribonucleotide)n-3'-hydroxyl + 5'-phospho-(deoxyribonucleotide)m = (deoxyribonucleotide)n+m + AMP + beta-nicotinamide D-nucleotide.. Functionally, DNA ligase that catalyzes the formation of phosphodiester linkages between 5'-phosphoryl and 3'-hydroxyl groups in double-stranded DNA using NAD as a coenzyme and as the energy source for the reaction. It is essential for DNA replication and repair of damaged DNA. This chain is DNA ligase, found in Cyanothece sp. (strain PCC 7425 / ATCC 29141).